A 483-amino-acid polypeptide reads, in one-letter code: Prenyltransferase vrtC (483 aa).

The protein belongs to the tryptophan dimethylallyltransferase family.

It participates in secondary metabolite biosynthesis; terpenoid biosynthesis. Functionally, prenyltransferase; part of the gene cluster that mediates the biosynthesis of viridicatumtoxin, a tetracycline-like fungal meroterpenoid with a unique, fused spirobicyclic ring system. The first step of the pathway is the production of the malonamoyl-CoA starter unit for the polyketide synthase vrtA. The aldolase vrtJ may be involved in the synthesis of the malonamate substrate for malonamoyl-CoA synthetase vrtB. The polyketide synthase vrtA then may utilize the malonamoyl-CoA starter unit, followed by sequential condensation of eight malonyl-CoA units to form the polyketide backbone. The cyclization of the last ring could be mediated by the lactamase-like protein vrtG. The proposed post-PKS tailoring steps are a hydroxylation at C5 catalyzed the cytochrome P450 monooxygenase vrtE, a hydroxylation at C12a catalyzed by VrtH and/or VrtI, and an O-methylation by the O-methyltransferase vrtF. VrtC is then proposed to catalyze the transfer of a geranyl group synthesized by vrtD to the aromatic C ring of the tetracyclic polyketide intermediate of viridicatumtoxin to yield previridicatumtoxin. Finally, the cytochrome P450 monooxygenase vrtK catalyzes the spirocyclization of the geranyl moiety of previridicatumtoxin to afford viridicatumtoxin. In Penicillium aethiopicum, this protein is Prenyltransferase vrtC.